Consider the following 165-residue polypeptide: MPPKFDPNEVKTIFMRAVGGEVAGGSTLAPKIGPLGLSPKKVGEDIAKATKDWKGLRVTVKLTIQNRQAAVSVVPSASALVIKALKEPARDRKKDKNVAHSGNVSLDEIIEVARTMRFKSLAKELSGTVKEILGTAFSVGCTVDGKNPHDVQKEIDNGEIEIPQE.

Residue arginine 67 is modified to N5-methylarginine.

The protein belongs to the universal ribosomal protein uL11 family. In terms of assembly, component of the large ribosomal subunit (LSU). Mature yeast ribosomes consist of a small (40S) and a large (60S) subunit. The 40S small subunit contains 1 molecule of ribosomal RNA (18S rRNA) and at least 33 different proteins. The large 60S subunit contains 3 rRNA molecules (25S, 5.8S and 5S rRNA) and at least 46 different proteins.

It localises to the cytoplasm. The protein localises to the nucleus. The protein resides in the nucleolus. Functionally, this protein binds directly to 26S ribosomal RNA. Component of the ribosome, a large ribonucleoprotein complex responsible for the synthesis of proteins in the cell. The small ribosomal subunit (SSU) binds messenger RNAs (mRNAs) and translates the encoded message by selecting cognate aminoacyl-transfer RNA (tRNA) molecules. The large subunit (LSU) contains the ribosomal catalytic site termed the peptidyl transferase center (PTC), which catalyzes the formation of peptide bonds, thereby polymerizing the amino acids delivered by tRNAs into a polypeptide chain. The nascent polypeptides leave the ribosome through a tunnel in the LSU and interact with protein factors that function in enzymatic processing, targeting, and the membrane insertion of nascent chains at the exit of the ribosomal tunnel. The protein is Large ribosomal subunit protein uL11A (rpl1201) of Schizosaccharomyces pombe (strain 972 / ATCC 24843) (Fission yeast).